Reading from the N-terminus, the 260-residue chain is Phosphatidylglycerol--prolipoprotein diacylglyceryl transferase (260 aa).

Helical transmembrane passes span 17-37 (VVKWYGIMMALGVVALVSWIF), 52-72 (LTAAIIAIPSGIVFAKLLHVI), 85-105 (IFSGEGLTIFGAIIGATIGLW), and 113-133 (FNLGYLLDVAVPGILLGQAIG). Arginine 134 is an a 1,2-diacyl-sn-glycero-3-phospho-(1'-sn-glycerol) binding site. 3 consecutive transmembrane segments (helical) span residues 170-190 (APTQAYEIIFLLCLLTFSLFI), 198-218 (GQLFLLYISLYAAWRVAIGFV), and 227-247 (GLEQAQVVGLILMAVAVPLFI).

It belongs to the Lgt family.

Its subcellular location is the cell membrane. It carries out the reaction L-cysteinyl-[prolipoprotein] + a 1,2-diacyl-sn-glycero-3-phospho-(1'-sn-glycerol) = an S-1,2-diacyl-sn-glyceryl-L-cysteinyl-[prolipoprotein] + sn-glycerol 1-phosphate + H(+). It functions in the pathway protein modification; lipoprotein biosynthesis (diacylglyceryl transfer). Functionally, catalyzes the transfer of the diacylglyceryl group from phosphatidylglycerol to the sulfhydryl group of the N-terminal cysteine of a prolipoprotein, the first step in the formation of mature lipoproteins. The chain is Phosphatidylglycerol--prolipoprotein diacylglyceryl transferase from Dehalococcoides mccartyi (strain ATCC BAA-2100 / JCM 16839 / KCTC 5957 / BAV1).